A 309-amino-acid polypeptide reads, in one-letter code: Ribonuclease Z (309 aa).

Zn(2+) is bound by residues His63, His65, Asp67, His68, His145, Asp216, and His274. The active-site Proton acceptor is the Asp67.

It belongs to the RNase Z family. As to quaternary structure, homodimer. Requires Zn(2+) as cofactor.

It catalyses the reaction Endonucleolytic cleavage of RNA, removing extra 3' nucleotides from tRNA precursor, generating 3' termini of tRNAs. A 3'-hydroxy group is left at the tRNA terminus and a 5'-phosphoryl group is left at the trailer molecule.. In terms of biological role, zinc phosphodiesterase, which displays some tRNA 3'-processing endonuclease activity. Probably involved in tRNA maturation, by removing a 3'-trailer from precursor tRNA. The chain is Ribonuclease Z from Streptococcus agalactiae serotype Ia (strain ATCC 27591 / A909 / CDC SS700).